Here is a 177-residue protein sequence, read N- to C-terminus: Large ribosomal subunit protein bL9 (177 aa).

Residues 151–177 are disordered; the sequence is EDEEIAEAAPVAEAQAEADGHSTEETA. The segment covering 157–167 has biased composition (low complexity); it reads EAAPVAEAQAE. Basic and acidic residues predominate over residues 168–177; it reads ADGHSTEETA.

This sequence belongs to the bacterial ribosomal protein bL9 family.

Binds to the 23S rRNA. This chain is Large ribosomal subunit protein bL9, found in Solidesulfovibrio magneticus (strain ATCC 700980 / DSM 13731 / RS-1) (Desulfovibrio magneticus).